A 100-amino-acid polypeptide reads, in one-letter code: NAD(P)H-quinone oxidoreductase subunit 4L, chloroplastic (100 aa).

Transmembrane regions (helical) follow at residues 1 to 21 (MFGHALLLGAFPFCIGIYGLI), 29 to 49 (ALMCLELIFNAVNVNFVTFPN), and 63 to 83 (VFVIAVAAAEAAIGSAIVLAI).

Belongs to the complex I subunit 4L family. In terms of assembly, NDH is composed of at least 16 different subunits, 5 of which are encoded in the nucleus.

The protein resides in the plastid. The protein localises to the chloroplast thylakoid membrane. It carries out the reaction a plastoquinone + NADH + (n+1) H(+)(in) = a plastoquinol + NAD(+) + n H(+)(out). The catalysed reaction is a plastoquinone + NADPH + (n+1) H(+)(in) = a plastoquinol + NADP(+) + n H(+)(out). Its function is as follows. NDH shuttles electrons from NAD(P)H:plastoquinone, via FMN and iron-sulfur (Fe-S) centers, to quinones in the photosynthetic chain and possibly in a chloroplast respiratory chain. The immediate electron acceptor for the enzyme in this species is believed to be plastoquinone. Couples the redox reaction to proton translocation, and thus conserves the redox energy in a proton gradient. This is NAD(P)H-quinone oxidoreductase subunit 4L, chloroplastic from Huperzia lucidula (Shining clubmoss).